A 545-amino-acid polypeptide reads, in one-letter code: MAAKEVVFGNDARVKMLAGVNILANAVKVTLGPKGRNVVLDKSFGSPLITKDGVSVAKEIELEDKFENMGAQMVKEVASKANDAAGDGTTTATVLAQAIVTEGLKAVAAGMNPMDLKRGIDKAVIAAVAELKNLSQDCADSKAIAQVGTISANSDESIGQIIATAMEKVGKEGVITVEEGQALENELDVVEGMQFDRGYLSPYFINKPETGSVELDHPFVLLVDKKISNIRELLPILEGLAKTGKPLLIVAEDVEGEALATLVVNNMRGIVKVAAVKAPGFGDRRKAMLQDVAILTGGTVIAEEIGLELEKATLEDLGTAKRVVITKDNTTIIDGNGEQAQIEARVSQIKQQIEESTSDYDKEKLQERMAKLAGGVAVIKVGAATEVEMKEKKARVEDALHATRAAVEEGVVPGGGVALIRVASKIADVEVANEDQKHGVVIALRAMEAPLRQIATNAGEEASVVANNVKNGSGNYGYNAGNDTYGDMLEMGILDPTKVTRSALQFAASIAGLMITTEAMVAELPKADAPDMGGMGGMGGMGGMM.

ATP is bound by residues 30 to 33, lysine 51, 87 to 91, glycine 415, and aspartate 495; these read TLGP and DGTTT.

Belongs to the chaperonin (HSP60) family. As to quaternary structure, forms a cylinder of 14 subunits composed of two heptameric rings stacked back-to-back. Interacts with the co-chaperonin GroES.

Its subcellular location is the cytoplasm. The enzyme catalyses ATP + H2O + a folded polypeptide = ADP + phosphate + an unfolded polypeptide.. Its function is as follows. Together with its co-chaperonin GroES, plays an essential role in assisting protein folding. The GroEL-GroES system forms a nano-cage that allows encapsulation of the non-native substrate proteins and provides a physical environment optimized to promote and accelerate protein folding. This Shewanella oneidensis (strain ATCC 700550 / JCM 31522 / CIP 106686 / LMG 19005 / NCIMB 14063 / MR-1) protein is Chaperonin GroEL.